The sequence spans 444 residues: Ribosomal protein uS12 methylthiotransferase RimO (444 aa).

An MTTase N-terminal domain is found at Lys-4–Ala-120. [4Fe-4S] cluster contacts are provided by Cys-13, Cys-49, Cys-83, Cys-157, Cys-161, and Cys-164. The Radical SAM core domain maps to Val-143–Arg-371. A TRAM domain is found at Glu-374–Ser-442.

The protein belongs to the methylthiotransferase family. RimO subfamily. Requires [4Fe-4S] cluster as cofactor.

It localises to the cytoplasm. The catalysed reaction is L-aspartate(89)-[ribosomal protein uS12]-hydrogen + (sulfur carrier)-SH + AH2 + 2 S-adenosyl-L-methionine = 3-methylsulfanyl-L-aspartate(89)-[ribosomal protein uS12]-hydrogen + (sulfur carrier)-H + 5'-deoxyadenosine + L-methionine + A + S-adenosyl-L-homocysteine + 2 H(+). In terms of biological role, catalyzes the methylthiolation of an aspartic acid residue of ribosomal protein uS12. This is Ribosomal protein uS12 methylthiotransferase RimO from Syntrophobacter fumaroxidans (strain DSM 10017 / MPOB).